The sequence spans 381 residues: Chitin deacetylase 8 (381 aa).

The first 18 residues, 1–18 (MKRLSVLCSLLLVAAALG), serve as a signal peptide directing secretion. Intrachain disulfides connect C27/C39 and C32/C37. D63, H117, and H121 together coordinate Zn(2+). 5 disulfides stabilise this stretch: C86–C335, C211–C216, C240–C246, C343–C365, and C348–C368. N171 carries N-linked (GlcNAc...) asparagine glycosylation.

It belongs to the carbohydrate esterase 4 (CE4) family. It depends on Zn(2+) as a cofactor. Strongly expressed in the midgut. Has little or no expression in other tissues tested.

It localises to the secreted. It catalyses the reaction [(1-&gt;4)-N-acetyl-beta-D-glucosaminyl](n) + n H2O = chitosan + n acetate. Its function is as follows. Hydrolyzes the N-acetamido groups of N-acetyl-D-glucosamine (GlcNAc) residues in chitin. Shows activity towards the chitinous oligomers GlcNAc(3), GlcNAc(4), GlcNAc(5) and GlcNAc(6), but not GlcNAc or GlcNAc(2). Requires the substrate to occupy subsites 0, +1, and +2 for optimum catalysis. This Bombyx mori (Silk moth) protein is Chitin deacetylase 8.